A 337-amino-acid polypeptide reads, in one-letter code: Holliday junction branch migration complex subunit RuvB (337 aa).

The interval Met1–Ser22 is disordered. Residues Met1–Tyr184 form a large ATPase domain (RuvB-L) region. ATP-binding positions include Leu23, Arg24, Gly65, Lys68, Thr69, Thr70, Glu131–Phe133, Arg174, Tyr184, and Arg221. Thr69 serves as a coordination point for Mg(2+). The segment at Asn185–Gln255 is small ATPAse domain (RuvB-S). The head domain (RuvB-H) stretch occupies residues Asn258–Lys337. 2 residues coordinate DNA: Arg313 and Arg318.

Belongs to the RuvB family. In terms of assembly, homohexamer. Forms an RuvA(8)-RuvB(12)-Holliday junction (HJ) complex. HJ DNA is sandwiched between 2 RuvA tetramers; dsDNA enters through RuvA and exits via RuvB. An RuvB hexamer assembles on each DNA strand where it exits the tetramer. Each RuvB hexamer is contacted by two RuvA subunits (via domain III) on 2 adjacent RuvB subunits; this complex drives branch migration. In the full resolvosome a probable DNA-RuvA(4)-RuvB(12)-RuvC(2) complex forms which resolves the HJ.

It is found in the cytoplasm. It catalyses the reaction ATP + H2O = ADP + phosphate + H(+). The RuvA-RuvB-RuvC complex processes Holliday junction (HJ) DNA during genetic recombination and DNA repair, while the RuvA-RuvB complex plays an important role in the rescue of blocked DNA replication forks via replication fork reversal (RFR). RuvA specifically binds to HJ cruciform DNA, conferring on it an open structure. The RuvB hexamer acts as an ATP-dependent pump, pulling dsDNA into and through the RuvAB complex. RuvB forms 2 homohexamers on either side of HJ DNA bound by 1 or 2 RuvA tetramers; 4 subunits per hexamer contact DNA at a time. Coordinated motions by a converter formed by DNA-disengaged RuvB subunits stimulates ATP hydrolysis and nucleotide exchange. Immobilization of the converter enables RuvB to convert the ATP-contained energy into a lever motion, pulling 2 nucleotides of DNA out of the RuvA tetramer per ATP hydrolyzed, thus driving DNA branch migration. The RuvB motors rotate together with the DNA substrate, which together with the progressing nucleotide cycle form the mechanistic basis for DNA recombination by continuous HJ branch migration. Branch migration allows RuvC to scan DNA until it finds its consensus sequence, where it cleaves and resolves cruciform DNA. This Pediococcus pentosaceus (strain ATCC 25745 / CCUG 21536 / LMG 10740 / 183-1w) protein is Holliday junction branch migration complex subunit RuvB.